Here is a 631-residue protein sequence, read N- to C-terminus: Biotin--protein ligase (631 aa).

The 213-residue stretch at 341 to 553 (ELYAKLINGC…QFDRYHRLLL (213 aa)) folds into the BPL/LPL catalytic domain.

Belongs to the biotin--protein ligase family. As to quaternary structure, monomer.

It localises to the cytoplasm. The catalysed reaction is apo-[methylmalonyl-CoA:pyruvate carboxytransferase] + biotin + ATP = holo-[methylmalonyl-CoA:pyruvate carboxytransferase] + AMP + diphosphate + H(+). It carries out the reaction apo-[propionyl-CoA:carbon-dioxide ligase (ADP-forming)] + biotin + ATP = holo-[propionyl-CoA:carbon-dioxide ligase (ADP-forming)] + AMP + diphosphate + H(+). It catalyses the reaction apo-[3-methylcrotonoyl-CoA:carbon-dioxide ligase (ADP-forming)] + biotin + ATP = holo-[3-methylcrotonoyl-CoA:carbon-dioxide ligase (ADP-forming)] + AMP + diphosphate + H(+). The enzyme catalyses biotin + L-lysyl-[protein] + ATP = N(6)-biotinyl-L-lysyl-[protein] + AMP + diphosphate + H(+). Post-translational modification of specific protein by attachment of biotin. Acts on various carboxylases such as acetyl-CoA-carboxylase, pyruvate carboxylase, propionyl CoA carboxylase, and 3-methylcrotonyl CoA carboxylase. This is Biotin--protein ligase (bpl1) from Schizosaccharomyces pombe (strain 972 / ATCC 24843) (Fission yeast).